A 448-amino-acid polypeptide reads, in one-letter code: Tubulin beta-1 chain (448 aa).

The GTP site is built by glutamine 11, glutamate 69, serine 138, glycine 142, threonine 143, glycine 144, asparagine 204, and asparagine 226. Glutamate 69 is a Mg(2+) binding site. A disordered region spans residues 427–448; the sequence is DATADEEGDLQEGESEYIEQEE. The span at 429 to 448 shows a compositional bias: acidic residues; the sequence is TADEEGDLQEGESEYIEQEE.

It belongs to the tubulin family. As to quaternary structure, dimer of alpha and beta chains. A typical microtubule is a hollow water-filled tube with an outer diameter of 25 nm and an inner diameter of 15 nM. Alpha-beta heterodimers associate head-to-tail to form protofilaments running lengthwise along the microtubule wall with the beta-tubulin subunit facing the microtubule plus end conferring a structural polarity. Microtubules usually have 13 protofilaments but different protofilament numbers can be found in some organisms and specialized cells. Mg(2+) is required as a cofactor.

Its subcellular location is the cytoplasm. The protein localises to the cytoskeleton. Functionally, tubulin is the major constituent of microtubules, a cylinder consisting of laterally associated linear protofilaments composed of alpha- and beta-tubulin heterodimers. Microtubules grow by the addition of GTP-tubulin dimers to the microtubule end, where a stabilizing cap forms. Below the cap, tubulin dimers are in GDP-bound state, owing to GTPase activity of alpha-tubulin. The protein is Tubulin beta-1 chain of Brugia pahangi (Filarial nematode worm).